The sequence spans 690 residues: Eukaryotic translation initiation factor 3 subunit B (690 aa).

The segment covering 1–11 (MAKKKSEEHSG) has biased composition (basic and acidic residues). The disordered stretch occupies residues 1–33 (MAKKKSEEHSGADANDSDYNEEPNFDDPPGYVD). Acidic residues predominate over residues 15 to 25 (NDSDYNEEPNF). The 85-residue stretch at 57 to 141 (SVVVVDNMPK…YTFAVNLFTD (85 aa)) folds into the RRM domain. 5 WD repeats span residues 207-246 (TRER…KIQK), 292-331 (GDGM…LLDL), 334-369 (IKIA…TLME), 442-484 (EIRE…KPSL), and 530-575 (PDHF…IRRT). Positions 613 to 646 (EQKDRLRLTRASKELLEKRAQLRETFMEYRNKRI) form a coiled coil.

Belongs to the eIF-3 subunit B family. As to quaternary structure, component of the eukaryotic translation initiation factor 3 (eIF-3) complex. The eIF-3 complex interacts with pix. Interacts with mxt.

The protein resides in the cytoplasm. Functionally, RNA-binding component of the eukaryotic translation initiation factor 3 (eIF-3) complex, which is involved in protein synthesis of a specialized repertoire of mRNAs and, together with other initiation factors, stimulates binding of mRNA and methionyl-tRNAi to the 40S ribosome. The eIF-3 complex specifically targets and initiates translation of a subset of mRNAs involved in cell proliferation. The polypeptide is Eukaryotic translation initiation factor 3 subunit B (Drosophila mojavensis (Fruit fly)).